We begin with the raw amino-acid sequence, 250 residues long: Small ribosomal subunit protein uS2 (250 aa).

Belongs to the universal ribosomal protein uS2 family.

This chain is Small ribosomal subunit protein uS2, found in Paraburkholderia phymatum (strain DSM 17167 / CIP 108236 / LMG 21445 / STM815) (Burkholderia phymatum).